We begin with the raw amino-acid sequence, 502 residues long: Probable mitochondrial-processing peptidase subunit alpha (502 aa).

This sequence belongs to the peptidase M16 family. Heterodimer of mas2 (alpha) and mas1 (beta) subunits, forming the mitochondrial processing protease (MPP) in which mas2 is involved in substrate recognition and binding and mas1 is the catalytic subunit.

The protein localises to the mitochondrion matrix. Substrate recognition and binding subunit of the essential mitochondrial processing protease (MPP), which cleaves the mitochondrial sequence off newly imported precursors proteins. The sequence is that of Probable mitochondrial-processing peptidase subunit alpha (mas2) from Schizosaccharomyces pombe (strain 972 / ATCC 24843) (Fission yeast).